The primary structure comprises 481 residues: uncharacterized protein (481 aa).

The next 11 helical transmembrane spans lie at 14 to 34 (LGFC…GIFL), 46 to 66 (FAPM…IVFA), 90 to 110 (IGIY…GVLA), 134 to 154 (FSVK…INLF), 167 to 187 (TVGK…IITT), 218 to 238 (FSSM…FESI), 258 to 278 (IAIF…MLLG), 303 to 323 (IIVV…SFGA), 377 to 397 (LAVI…IALA), 411 to 431 (AFTD…LAVS), and 446 to 466 (YFSI…AYLH).

It belongs to the amino acid-polyamine-organocation (APC) superfamily.

The protein localises to the cell membrane. Functionally, probable amino-acid or metabolite transport protein. This is an uncharacterized protein from Mycobacterium tuberculosis (strain CDC 1551 / Oshkosh).